A 124-amino-acid chain; its full sequence is Small ribosomal subunit protein uS12 (124 aa).

Aspartate 89 carries the post-translational modification 3-methylthioaspartic acid.

Belongs to the universal ribosomal protein uS12 family. As to quaternary structure, part of the 30S ribosomal subunit. Contacts proteins S8 and S17. May interact with IF1 in the 30S initiation complex.

In terms of biological role, with S4 and S5 plays an important role in translational accuracy. Its function is as follows. Interacts with and stabilizes bases of the 16S rRNA that are involved in tRNA selection in the A site and with the mRNA backbone. Located at the interface of the 30S and 50S subunits, it traverses the body of the 30S subunit contacting proteins on the other side and probably holding the rRNA structure together. The combined cluster of proteins S8, S12 and S17 appears to hold together the shoulder and platform of the 30S subunit. In Shewanella putrefaciens (strain CN-32 / ATCC BAA-453), this protein is Small ribosomal subunit protein uS12.